Reading from the N-terminus, the 118-residue chain is Ribosome-binding factor A (118 aa).

This sequence belongs to the RbfA family. Monomer. Binds 30S ribosomal subunits, but not 50S ribosomal subunits or 70S ribosomes.

It is found in the cytoplasm. One of several proteins that assist in the late maturation steps of the functional core of the 30S ribosomal subunit. Associates with free 30S ribosomal subunits (but not with 30S subunits that are part of 70S ribosomes or polysomes). Required for efficient processing of 16S rRNA. May interact with the 5'-terminal helix region of 16S rRNA. This Streptococcus pyogenes serotype M1 protein is Ribosome-binding factor A.